Consider the following 262-residue polypeptide: Indole-3-glycerol phosphate synthase (262 aa).

This sequence belongs to the TrpC family.

The enzyme catalyses 1-(2-carboxyphenylamino)-1-deoxy-D-ribulose 5-phosphate + H(+) = (1S,2R)-1-C-(indol-3-yl)glycerol 3-phosphate + CO2 + H2O. The protein operates within amino-acid biosynthesis; L-tryptophan biosynthesis; L-tryptophan from chorismate: step 4/5. The sequence is that of Indole-3-glycerol phosphate synthase from Leuconostoc mesenteroides subsp. mesenteroides (strain ATCC 8293 / DSM 20343 / BCRC 11652 / CCM 1803 / JCM 6124 / NCDO 523 / NBRC 100496 / NCIMB 8023 / NCTC 12954 / NRRL B-1118 / 37Y).